Consider the following 207-residue polypeptide: dITP/XTP pyrophosphatase (207 aa).

Substrate is bound at residue 7 to 12 (SNNAKK). Asp-72 (proton acceptor) is an active-site residue. A Mg(2+)-binding site is contributed by Asp-72. Residues Ser-73, 155–158 (FGYD), Lys-183, and 188–189 (HR) each bind substrate.

The protein belongs to the HAM1 NTPase family. Homodimer. Requires Mg(2+) as cofactor.

It catalyses the reaction XTP + H2O = XMP + diphosphate + H(+). It carries out the reaction dITP + H2O = dIMP + diphosphate + H(+). The enzyme catalyses ITP + H2O = IMP + diphosphate + H(+). Pyrophosphatase that catalyzes the hydrolysis of nucleoside triphosphates to their monophosphate derivatives, with a high preference for the non-canonical purine nucleotides XTP (xanthosine triphosphate), dITP (deoxyinosine triphosphate) and ITP. Seems to function as a house-cleaning enzyme that removes non-canonical purine nucleotides from the nucleotide pool, thus preventing their incorporation into DNA/RNA and avoiding chromosomal lesions. This chain is dITP/XTP pyrophosphatase, found in Corynebacterium diphtheriae (strain ATCC 700971 / NCTC 13129 / Biotype gravis).